Reading from the N-terminus, the 61-residue chain is MAKKSLIAKSERTPKFKVRAYHRCKLCGRSRGYYRKFGLCRLCFRKHASAGSIPGIVKASW.

Zn(2+) is bound by residues Cys24, Cys27, Cys40, and Cys43.

This sequence belongs to the universal ribosomal protein uS14 family. Zinc-binding uS14 subfamily. In terms of assembly, part of the 30S ribosomal subunit. Contacts proteins S3 and S10. The cofactor is Zn(2+).

In terms of biological role, binds 16S rRNA, required for the assembly of 30S particles and may also be responsible for determining the conformation of the 16S rRNA at the A site. The protein is Small ribosomal subunit protein uS14 of Acidithiobacillus ferrooxidans (strain ATCC 23270 / DSM 14882 / CIP 104768 / NCIMB 8455) (Ferrobacillus ferrooxidans (strain ATCC 23270)).